Reading from the N-terminus, the 246-residue chain is rRNA methyltransferase 2, mitochondrial (246 aa).

Residues 1–18 constitute a mitochondrion transit peptide; that stretch reads MAGYLKLVCVSFQRQGFH. S-adenosyl-L-methionine contacts are provided by residues 83–86, Asp-112, 129–130, and Asp-154; these read PGAW and DV. Lys-194 serves as the catalytic Proton acceptor.

It belongs to the class I-like SAM-binding methyltransferase superfamily. RNA methyltransferase RlmE family. In terms of tissue distribution, widely expressed, with highest expression in muscle, placenta, and heart.

The protein resides in the mitochondrion. The catalysed reaction is uridine(1369) in 16S rRNA + S-adenosyl-L-methionine = 2'-O-methyluridine(1369) in 16S rRNA + S-adenosyl-L-homocysteine + H(+). In terms of biological role, S-adenosyl-L-methionine-dependent 2'-O-ribose methyltransferase that catalyzes the formation of 2'-O-methyluridine at position 1369 (Um1369) in the 16S mitochondrial large subunit ribosomal RNA (mtLSU rRNA), a universally conserved modification in the peptidyl transferase domain of the mtLSU rRNA. This activity may require prior 2'-O-methylguanosine modification at position 1370 (Gm1370) by MRM3. Essential for late-stage assembly of mtLSU required for efficient translation of mitochondrial DNA encoded proteins; methyltransferase activity is not required for this function. Essential for mitochondrial respiratory function. The polypeptide is rRNA methyltransferase 2, mitochondrial (Homo sapiens (Human)).